The primary structure comprises 217 residues: Harpin secretion protein HrcR (217 aa).

4 helical membrane passes run 11-31 (FALFLGALSLIPMLMIVCTCF), 52-72 (PNMALYGIALAATLFVMAPVF), 158-178 (IGFLIYIPFIVIDLIVSNVLL), and 185-205 (VAPMTLSLPLKMLLFVLINGW).

Belongs to the FliP/MopC/SpaP family.

Its subcellular location is the cell membrane. Functionally, required for the secretion of harpin. The protein is Harpin secretion protein HrcR (hrcR) of Erwinia amylovora (Fire blight bacteria).